The primary structure comprises 55 residues: Large ribosomal subunit protein bL33 (55 aa).

Belongs to the bacterial ribosomal protein bL33 family.

This is Large ribosomal subunit protein bL33 from Bradyrhizobium sp. (strain BTAi1 / ATCC BAA-1182).